Consider the following 304-residue polypeptide: Ribosomal RNA small subunit methyltransferase H (304 aa).

Residues 36–38 (CGH), Asp55, Phe81, Asp102, and Gln109 each bind S-adenosyl-L-methionine.

Belongs to the methyltransferase superfamily. RsmH family.

The protein resides in the cytoplasm. It carries out the reaction cytidine(1402) in 16S rRNA + S-adenosyl-L-methionine = N(4)-methylcytidine(1402) in 16S rRNA + S-adenosyl-L-homocysteine + H(+). Specifically methylates the N4 position of cytidine in position 1402 (C1402) of 16S rRNA. The sequence is that of Ribosomal RNA small subunit methyltransferase H from Onion yellows phytoplasma (strain OY-M).